A 349-amino-acid chain; its full sequence is MSLVGVHNEWDPLEEVVVGTARRPCAGPDRSLLAVEYAEYAGPGRWQEVPTGPYPDRALKETEDELEELCEELRGLGVTVRRPGARDSAAPVRTPDWESDGYGDLCPRDGLLVVGDTVIEAPMALRARFLESLAYKELLVEYLAAGSRWISAPKPRLAEGMYSPSGPSGERLRDLEPVFDAANVLRLGTDLLYLVSDSGNELGARWLQSALGAAYTVHPCRGLYSSTHIDSTLVPLRPGLVLVNPARVTDDNLPGVLRTWQRIECPALAGLGYAGDVPHCSTWIGMSLLVVRPGLVVVDSRHRELMRVLERHGVDVLPLKLTHARMLGGGFHGVTLDIRRTGALETYRF.

This sequence belongs to the amidinotransferase family.

It carries out the reaction 1-amino-1-deoxy-scyllo-inositol 4-phosphate + L-arginine = 1-guanidino-1-deoxy-scyllo-inositol 4-phosphate + L-ornithine. It participates in antibiotic biosynthesis; streptomycin biosynthesis. It is not obvious if strB2 participates in streptomycin biosynthesis as an inosamine-phosphate amidinotransferase. Attempt to measure its activity have failed and the nucleophilic cysteine which is the key residue for amidine transfer is not conserved but replaced by a glycine residue. This chain is Putative inosamine-phosphate amidinotransferase 2 (strB2), found in Streptomyces griseus.